Here is a 181-residue protein sequence, read N- to C-terminus: MTASPLVTADQGAVAAPDQAFFDSLNAEVNDKGFLVTSTEELFQWARTGSLWWMTFGLACCAVEMIHVNMPRYDMERFGVAPRASPRQSDVMIVAGTLCNKMAPALRKVYDQMSDPKYVISMGSCANGGGYYHYSYSVVRGCDRIVPVDIYVPGCPPTAEALLYGVMQLQRKIRRAGTLER.

Residues C60, C61, C125, and C155 each contribute to the [4Fe-4S] cluster site.

It belongs to the complex I 20 kDa subunit family. NDH-1 is composed of 14 different subunits. Subunits NuoB, C, D, E, F, and G constitute the peripheral sector of the complex. [4Fe-4S] cluster serves as cofactor.

Its subcellular location is the cell inner membrane. The catalysed reaction is a quinone + NADH + 5 H(+)(in) = a quinol + NAD(+) + 4 H(+)(out). NDH-1 shuttles electrons from NADH, via FMN and iron-sulfur (Fe-S) centers, to quinones in the respiratory chain. Couples the redox reaction to proton translocation (for every two electrons transferred, four hydrogen ions are translocated across the cytoplasmic membrane), and thus conserves the redox energy in a proton gradient. The protein is NADH-quinone oxidoreductase subunit B of Novosphingobium aromaticivorans (strain ATCC 700278 / DSM 12444 / CCUG 56034 / CIP 105152 / NBRC 16084 / F199).